We begin with the raw amino-acid sequence, 858 residues long: Leucine--tRNA ligase (858 aa).

The short motif at 42–52 (PYPSGRLHMGH) is the 'HIGH' region element. The short motif at 618–622 (KMSKS) is the 'KMSKS' region element. Lys621 provides a ligand contact to ATP.

The protein belongs to the class-I aminoacyl-tRNA synthetase family.

It localises to the cytoplasm. The catalysed reaction is tRNA(Leu) + L-leucine + ATP = L-leucyl-tRNA(Leu) + AMP + diphosphate. This is Leucine--tRNA ligase from Aliivibrio fischeri (strain ATCC 700601 / ES114) (Vibrio fischeri).